Reading from the N-terminus, the 250-residue chain is 3-deoxy-manno-octulosonate cytidylyltransferase (250 aa).

The protein belongs to the KdsB family.

It localises to the cytoplasm. The catalysed reaction is 3-deoxy-alpha-D-manno-oct-2-ulosonate + CTP = CMP-3-deoxy-beta-D-manno-octulosonate + diphosphate. Its pathway is nucleotide-sugar biosynthesis; CMP-3-deoxy-D-manno-octulosonate biosynthesis; CMP-3-deoxy-D-manno-octulosonate from 3-deoxy-D-manno-octulosonate and CTP: step 1/1. It participates in bacterial outer membrane biogenesis; lipopolysaccharide biosynthesis. Functionally, activates KDO (a required 8-carbon sugar) for incorporation into bacterial lipopolysaccharide in Gram-negative bacteria. In Francisella philomiragia subsp. philomiragia (strain ATCC 25017 / CCUG 19701 / FSC 153 / O#319-036), this protein is 3-deoxy-manno-octulosonate cytidylyltransferase.